The chain runs to 107 residues: Large ribosomal subunit protein bL21 (107 aa).

This sequence belongs to the bacterial ribosomal protein bL21 family. Part of the 50S ribosomal subunit. Contacts protein L20.

Functionally, this protein binds to 23S rRNA in the presence of protein L20. In Chlamydia trachomatis serovar L2 (strain ATCC VR-902B / DSM 19102 / 434/Bu), this protein is Large ribosomal subunit protein bL21.